Reading from the N-terminus, the 263-residue chain is Tryptophan 2,3-dioxygenase (263 aa).

Residues 32-36, tyrosine 94, and arginine 98 each bind substrate; that span reads FIIVH. Histidine 221 contacts heme. Threonine 235 serves as a coordination point for substrate.

Belongs to the tryptophan 2,3-dioxygenase family. As to quaternary structure, homotetramer. Heme is required as a cofactor.

It catalyses the reaction L-tryptophan + O2 = N-formyl-L-kynurenine. The protein operates within amino-acid degradation; L-tryptophan degradation via kynurenine pathway; L-kynurenine from L-tryptophan: step 1/2. Its function is as follows. Heme-dependent dioxygenase that catalyzes the oxidative cleavage of the L-tryptophan (L-Trp) pyrrole ring and converts L-tryptophan to N-formyl-L-kynurenine. Catalyzes the oxidative cleavage of the indole moiety. This is Tryptophan 2,3-dioxygenase from Erythrobacter litoralis (strain HTCC2594).